A 76-amino-acid chain; its full sequence is Gas vesicle protein A1 (76 aa).

2 binds to GvpF1 regions span residues 1-22 (MAQP…KGVV) and 2-43 (AQPD…EARV). Positions 9-19 (LAEVLDRVLDK) are alpha helix 1. The tract at residues 23–31 (VDVWARVSL) is beta-strand 1. Residues 32 to 34 (VGI) form a beta turn region. The segment at 35–43 (EILTVEARV) is beta-strand 2. The alpha helix 2 stretch occupies residues 48-67 (VDTFLHYAEEIAKIEQAELT).

Belongs to the gas vesicle GvpA family. Major component of the gas vesicle shell which is 2 nm thick and consists of a single layer of the protein. It forms 4.6 nm-wide ribs nearly perpendicular to the long axis of the vesicle. Modeled as antiparallel homodimers. The ribs form a low-pitch helix rather than a stack of hoops. Interacts with GvpF1 via its N-terminus (residues 1-43) in early growth stages, none of the other GvpG1 to GvpM1 proteins were seen to directly bind GvpA1 in H.volcanii experiments. Might interact with GvpJ1. Might interact with GvpG1, GvpH1, GvpJ1, GvpM1, GvpN1 and GvpO1.

It is found in the gas vesicle shell. Gas vesicles are hollow, gas filled proteinaceous nanostructures found in several microbial planktonic microorganisms. They allow positioning of halobacteria at the optimal depth for growth in the poorly aerated shallow brine pools of their habitat. GvpA forms the protein shell. The critical collapse pressure (CCP) of p-vac gas vesicles is 0.66 MPa; mutating residues in p-gvpA to those found in c-gvpA increases the CCP. These residues partially and independently control the width and strength of gas vesicles. In stationary phase gas vesicles, about 30 times more GvpA1 is found than GvpA2. Its function is as follows. Expression of a 9.5 kb p-vac DNA fragment containing 2 divergently transcribed regions (gvpD-gvpE-gvpF-gvpG-gvpH-gvpI-gvpJ-gvpK-gvpL-gvpM and gvpA-gvpC-gvpN-gvpO) allows H.volcanii to produce gas vesicles. All site-directed mutagenesis is tested in H.volcanii. A minimal gas vesicle can be made in H.volcanii by gvpA1-gvpO1 plus gvpF1-gvpG1-gvpJ1-gvpK1-gvpL1-gvpM1; lack of enough GvpJ1 prevents their formation. A similar region restores gas vesicle production in H.halobium without the p-vac locus, but it still has the c-vac locus. In Halobacterium salinarum (strain ATCC 700922 / JCM 11081 / NRC-1) (Halobacterium halobium), this protein is Gas vesicle protein A1.